We begin with the raw amino-acid sequence, 325 residues long: FLSCSGKSGLESGIPKVSLVIDGTFDDKSFNESALNGVKKLKEEFEIELVLKESSTNSYLSDLEGLKDAGSNLIWLIGYKFSDVAKAVSLQNSEMKYAIIDPVYSNEPIPANLVGMTFRAQEGAFLTGYIAAKVSKTGKIGFLGGIEGDIVDAFRYGYEAGAKYANKDIKIFSQYIGSFSDLEAGRSVATKMYSDGIDIIHHAAGLGGIGAIEVAKELGSGHYIIGVDEDQSYLAPNNVITSTTKDVGRSLNLLTSNYLKTNTFEGGKLINYGLKEGVVGFVRNPKMIPFEVEKEIDSLSSKIINKEVIVPYNKESYEKFLKEFI.

An N-terminal signal peptide occupies residues 1-3 (FLS). C4 carries the N-palmitoyl cysteine lipid modification. The S-diacylglycerol cysteine moiety is linked to residue C4.

It belongs to the BMP lipoprotein family. As to quaternary structure, monomer.

The protein resides in the cell inner membrane. Immunogenic protein. May be part of an ABC-type nucleoside uptake system involved in the purine salvage pathway. This is Basic membrane protein A (bmpA) from Borreliella afzelii (Borrelia afzelii).